Reading from the N-terminus, the 190-residue chain is Apolipoprotein M (190 aa).

A signal peptide (not cleaved) is located at residues methionine 1 to glutamine 22. 3 cysteine pairs are disulfide-bonded: cysteine 23-cysteine 169, cysteine 95-cysteine 185, and cysteine 130-cysteine 159. The tetradecanoate site is built by glutamate 138 and arginine 145.

This sequence belongs to the calycin superfamily. Lipocalin family. Highly divergent. In terms of assembly, interacts with LRP2; LRP2 mediates APOM renal uptake and subsequent lysosomal degradation. Expressed by the liver; secreted in plasma.

The protein resides in the secreted. Its function is as follows. Probably involved in lipid transport. Can bind sphingosine-1-phosphate, myristic acid, palmitic acid and stearic acid, retinol, all-trans-retinoic acid and 9-cis-retinoic acid. This Mus musculus (Mouse) protein is Apolipoprotein M (Apom).